A 120-amino-acid polypeptide reads, in one-letter code: ATP-dependent Clp protease adapter protein ClpS (120 aa).

The protein belongs to the ClpS family. Binds to the N-terminal domain of the chaperone ClpA.

Functionally, involved in the modulation of the specificity of the ClpAP-mediated ATP-dependent protein degradation. The polypeptide is ATP-dependent Clp protease adapter protein ClpS (Pseudomonas fluorescens (strain ATCC BAA-477 / NRRL B-23932 / Pf-5)).